The primary structure comprises 411 residues: ATPase family AAA domain-containing protein 3C (411 aa).

177 to 184 provides a ligand contact to ATP; it reads GPPGTGKT.

The protein belongs to the AAA ATPase family.

The protein is ATPase family AAA domain-containing protein 3C (ATAD3C) of Homo sapiens (Human).